The sequence spans 290 residues: Pirin (290 aa).

The Fe cation site is built by histidine 56, histidine 58, histidine 101, and glutamate 103.

It belongs to the pirin family. May interact with NF1/CTF1. Interacts with BCL3. Identified in a complex comprised of PIR, BLC3, NFKB1 and target DNA. It depends on Fe cation as a cofactor. Weakly expressed in bone marrow.

The protein localises to the nucleus. The protein resides in the cytoplasm. It catalyses the reaction quercetin + O2 = 2-(3,4-dihydroxybenzoyloxy)-4,6-dihydroxybenzoate + CO. It functions in the pathway flavonoid metabolism; quercetin degradation. Functionally, transcriptional coregulator of NF-kappa-B which facilitates binding of NF-kappa-B proteins to target kappa-B genes in a redox-state-dependent manner. May be required for efficient terminal myeloid maturation of hematopoietic cells. Has quercetin 2,3-dioxygenase activity (in vitro). This Mus musculus (Mouse) protein is Pirin (Pir).